The following is a 501-amino-acid chain: Cyclin-dependent kinase 19 (501 aa).

Methionine 1 carries the N-acetylmethionine modification. In terms of domain architecture, Protein kinase spans 21–335; sequence EYEGCKVGRG…SEQALQDPYF (315 aa). ATP-binding positions include 27-35 and lysine 52; that span reads VGRGTYGHV. The Proton acceptor role is filled by aspartate 151. A disordered region spans residues 362-501; the sequence is DEPEEKGDKN…YHSSHQTHRY (140 aa). A compositionally biased stretch (low complexity) spans 371–392; that stretch reads NQPQQQNPHQQPAAPAQQTAAP. The span at 408–421 shows a compositional bias: gly residues; it reads TAGGATAGGGGAGA. A Phosphoserine modification is found at serine 449. A compositionally biased stretch (low complexity) spans 467–495; that stretch reads YQSSVQGSSQSQSTLGYSSSQQSTQYHSS.

The protein belongs to the protein kinase superfamily. CMGC Ser/Thr protein kinase family. CDC2/CDKX subfamily.

The protein resides in the cytoplasm. The protein localises to the perinuclear region. Its subcellular location is the nucleus. It carries out the reaction L-seryl-[protein] + ATP = O-phospho-L-seryl-[protein] + ADP + H(+). It catalyses the reaction L-threonyl-[protein] + ATP = O-phospho-L-threonyl-[protein] + ADP + H(+). This is Cyclin-dependent kinase 19 (Cdk19) from Mus musculus (Mouse).